The chain runs to 624 residues: Polycystin-2-like protein 2 (624 aa).

The Cytoplasmic portion of the chain corresponds to 1-31 (MAEASRWHRGGASKHKLHYRKEVEITTTLQE). Residues 32–52 (LLLYFIFLINLCILTFGMVNP) form a helical membrane-spanning segment. Over 53-276 (HMYYLNKVMS…YSVKLLRYVS (224 aa)) the chain is Extracellular. N-linked (GlcNAc...) asparagine glycosylation is found at asparagine 115 and asparagine 138. The helical transmembrane segment at 277-297 (YYDYFIASCEITFCIFLFVFT) threads the bilayer. The Cytoplasmic portion of the chain corresponds to 298-314 (TQEVKKIKEFKSAYFKS). The helical transmembrane segment at 315-335 (IWNWLELLLLLLCFVAVSFNT) threads the bilayer. The Extracellular portion of the chain corresponds to 336-360 (YYNVQIFLLLGQLLKSTEKYSDFYF). Residues 361 to 381 (LACWHIYYNNIIAITIFFAWI) traverse the membrane as a helical segment. Residues 382–406 (KIFKFISFNKTMSQLSSTLSRCVKD) are Cytoplasmic-facing. A helical transmembrane segment spans residues 407–427 (IVGFAIMFFIIFFAYAQLGFL). The Extracellular portion of the chain corresponds to 428-469 (VFGSQVDDFSTFQNSIFAQFRIVLGDFNFAGIQQANPILGPI). The helical transmembrane segment at 470 to 490 (YFITFIFFVFFVLLNMFLAII) threads the bilayer. Residues 491–624 (NDTYSEVKAD…NQVVRKVSAL (134 aa)) are Cytoplasmic-facing. The stretch at 556–576 (ENEIQNAEQMKKWKERLEKKY) forms a coiled coil.

It belongs to the polycystin family. Interacts with TRPC1 and TRPC5. Expressed only in testis. Expressed also in brain and kidney. In terms of tissue distribution, expressed only in transformed lymphoblasts.

The protein localises to the membrane. Functionally, exhibits a lower single conductance but no spontaneous channel activity. May function as a regulator of calcium channels or a channel component involving Ca2(+) homeostasis. This chain is Polycystin-2-like protein 2, found in Homo sapiens (Human).